A 127-amino-acid polypeptide reads, in one-letter code: Large ribosomal subunit protein eL24 (127 aa).

The tract at residues 93-127 (KRAQKPEVKQAAAEQAKREIKEKKKAAAKKAAPKK) is disordered. The span at 115–127 (KKKAAAKKAAPKK) shows a compositional bias: basic residues.

The protein belongs to the eukaryotic ribosomal protein eL24 family.

This chain is Large ribosomal subunit protein eL24 (rpl24), found in Dictyostelium discoideum (Social amoeba).